A 165-amino-acid polypeptide reads, in one-letter code: Peptide deformylase (165 aa).

C88 and H130 together coordinate Fe cation. E131 is an active-site residue. Position 134 (H134) interacts with Fe cation.

This sequence belongs to the polypeptide deformylase family. It depends on Fe(2+) as a cofactor.

It carries out the reaction N-terminal N-formyl-L-methionyl-[peptide] + H2O = N-terminal L-methionyl-[peptide] + formate. Its function is as follows. Removes the formyl group from the N-terminal Met of newly synthesized proteins. Requires at least a dipeptide for an efficient rate of reaction. N-terminal L-methionine is a prerequisite for activity but the enzyme has broad specificity at other positions. In Borreliella burgdorferi (strain ATCC 35210 / DSM 4680 / CIP 102532 / B31) (Borrelia burgdorferi), this protein is Peptide deformylase.